The following is a 462-amino-acid chain: Putative ABC transporter A445L (462 aa).

Belongs to the protein kinase superfamily. ADCK protein kinase family.

The chain is Putative ABC transporter A445L from Chlorella (PBCV-1).